The chain runs to 250 residues: Ribosomal RNA small subunit methyltransferase J (250 aa).

Residues 101–102 (RD), 117–118 (ER), 153–154 (SS), and Asp-171 contribute to the S-adenosyl-L-methionine site.

This sequence belongs to the methyltransferase superfamily. RsmJ family.

The protein localises to the cytoplasm. It catalyses the reaction guanosine(1516) in 16S rRNA + S-adenosyl-L-methionine = N(2)-methylguanosine(1516) in 16S rRNA + S-adenosyl-L-homocysteine + H(+). Functionally, specifically methylates the guanosine in position 1516 of 16S rRNA. This Erwinia tasmaniensis (strain DSM 17950 / CFBP 7177 / CIP 109463 / NCPPB 4357 / Et1/99) protein is Ribosomal RNA small subunit methyltransferase J.